We begin with the raw amino-acid sequence, 1017 residues long: Pikachurin (1017 aa).

The N-terminal stretch at 1-24 (MDLIRGVLLRLLLLASSLGPGAVS) is a signal peptide. Fibronectin type-III domains lie at 37–136 (PPLD…TLSQ) and 144–239 (APQQ…TLCP). Asn-47 is a glycosylation site (N-linked (GlcNAc...) asparagine). The 39-residue stretch at 343–381 (FDMPCDETLCSADSFCVNDYTWGGSRCQCTLGKGGESCS) folds into the EGF-like 1 domain. 11 cysteine pairs are disulfide-bonded: Cys-347/Cys-358, Cys-352/Cys-369, Cys-371/Cys-380, Cys-534/Cys-564, Cys-569/Cys-580, Cys-574/Cys-590, Cys-592/Cys-601, Cys-788/Cys-799, Cys-793/Cys-808, Cys-810/Cys-819, and Cys-987/Cys-1014. The Laminin G-like 1 domain maps to 386-564 (IQYPQFFGHS…ALSGADVGEC (179 aa)). EGF-like domains follow at residues 565–602 (SSGI…RHCE) and 784–820 (AAHP…LHCQ). Residues 609–788 (IPQFRESLRS…VNVENAAHPC (180 aa)) form the Laminin G-like 2 domain. Positions 835–1014 (IEIPQFIGRS…AVDGKNINTC (180 aa)) constitute a Laminin G-like 3 domain.

Interacts with DAG1 alpha-dystroglycan. Interacts with GPR158 and GPR179; transsynaptic interaction is required for synaptic organization of photoreceptor cells. Post-translationally, O-glycosylated; contains chondroitin sulfate and heparan sulfate.

It is found in the secreted. The protein localises to the extracellular space. The protein resides in the extracellular matrix. It localises to the synaptic cleft. Its subcellular location is the presynaptic active zone. Functionally, involved in both the retinal photoreceptor ribbon synapse formation and physiological functions of visual perception. Plays a key role in the synaptic organization of photoreceptors by mediating transsynaptic interaction between alpha-dystroglycan and GPR179 on the postsynaptic membrane. Necessary for proper bipolar dendritic tip apposition to the photoreceptor ribbon synapse. Promotes matrix assembly and cell adhesiveness. The protein is Pikachurin (EGFLAM) of Homo sapiens (Human).